An 825-amino-acid chain; its full sequence is Phenylalanine--tRNA ligase beta subunit (825 aa).

Positions 39–154 (RSWAEGVVLG…KAHPLGSDAR (116 aa)) constitute a tRNA-binding domain. The region spanning 411 to 506 (PLERTLKLRL…RLYGYDRFSE (96 aa)) is the B5 domain. Residues aspartate 484, aspartate 490, glutamate 493, and glutamate 494 each coordinate Mg(2+). Residues 731-824 (SPFPASDRDI…LEKHFPVTLR (94 aa)) form the FDX-ACB domain.

Belongs to the phenylalanyl-tRNA synthetase beta subunit family. Type 1 subfamily. In terms of assembly, tetramer of two alpha and two beta subunits. It depends on Mg(2+) as a cofactor.

The protein resides in the cytoplasm. It catalyses the reaction tRNA(Phe) + L-phenylalanine + ATP = L-phenylalanyl-tRNA(Phe) + AMP + diphosphate + H(+). In Synechococcus sp. (strain JA-3-3Ab) (Cyanobacteria bacterium Yellowstone A-Prime), this protein is Phenylalanine--tRNA ligase beta subunit.